We begin with the raw amino-acid sequence, 518 residues long: Transcription factor TT8 (518 aa).

2 coiled-coil regions span residues 220–240 (EVHEEAEDEEEVEEEMTMSEE) and 405–428 (VNHLRKRVHELENTHHEQQHKRTR). The 50-residue stretch at 359 to 408 (REDLSHVVAERRRREKLNEKFITLRSMVPFVTKMDKVSILGDTIAYVNHL) folds into the bHLH domain.

Belongs to the bHLH protein family. In terms of assembly, homodimer. Interacts with MYB4, MYB5, MYB6, MYB82, MYB113, MYB114, MYB75/PAP1, MYB90/PAP2, and TT2. As to expression, buds, flowers and developing siliques, but not in leaves, stems and roots.

It localises to the nucleus. Functionally, transcription activator, when associated with MYB75/PAP1 or MYB90/PAP2. Involved in the control of flavonoid pigmentation. Plays a key role in regulating leucoanthocyanidin reductase (BANYULS) and dihydroflavonol-4-reductase (DFR). Not required for leucoanthocyanidin dioxygenase (LDOX) expression. This is Transcription factor TT8 from Arabidopsis thaliana (Mouse-ear cress).